The sequence spans 587 residues: Integrator complex subunit 14 (587 aa).

In terms of domain architecture, VWFA spans 3-113 (TLIALDASLS…NILQVVVFTD (111 aa)). Disordered stretches follow at residues 190-211 (KSSDAVEGNPNPNPNPSHKSEL) and 304-331 (REKSGSSRRSGNLSAAAKPPKLNLDTSN).

Belongs to the Integrator subunit 14 family. Belongs to the multiprotein complex Integrator, at least composed of IntS1, IntS2, IntS3, IntS4, omd/IntS5, IntS6, defl/IntS7, IntS8, IntS9, IntS10, IntS11, IntS12, asun/IntS13, IntS14 and IntS15. The core complex associates with protein phosphatase 2A subunits mts/PP2A and Pp2A-29B, to form the Integrator-PP2A (INTAC) complex.

Its subcellular location is the nucleus. Component of the integrator complex, a multiprotein complex that terminates RNA polymerase II (Pol II) transcription in the promoter-proximal region of genes. The integrator complex provides a quality checkpoint during transcription elongation by driving premature transcription termination of transcripts that are unfavorably configured for transcriptional elongation: the complex terminates transcription by (1) catalyzing dephosphorylation of the C-terminal domain (CTD) of Pol II subunit Polr2A/Rbp1 and Spt5, and (2) degrading the exiting nascent RNA transcript via endonuclease activity. The integrator complex is also involved in the 3'-end processing of the U7 snRNA, and also the spliceosomal snRNAs U1, U2, U4 and U5. This is Integrator complex subunit 14 from Drosophila melanogaster (Fruit fly).